A 407-amino-acid chain; its full sequence is [Pyruvate dehydrogenase (acetyl-transferring)] kinase isozyme 2, mitochondrial (407 aa).

The region spanning 135-364 is the Histidine kinase domain; it reads LEYKDTYGDD…DAVIYLKALS (230 aa). Phosphotyrosine is present on residues tyrosine 215 and tyrosine 216. ATP-binding positions include 251 to 258, aspartate 290, 309 to 310, and 325 to 330; these read ELFKNAMR, ST, and GFGYGL. Lysine 376 carries the N6-succinyllysine modification.

It belongs to the PDK/BCKDK protein kinase family. Homodimer, and heterodimer with PDK1. Interacts with the pyruvate dehydrogenase complex subunit DLAT, and is part of the multimeric pyruvate dehydrogenase complex that contains multiple copies of pyruvate dehydrogenase (E1), dihydrolipoamide acetyltransferase (DLAT, E2) and lipoamide dehydrogenase (DLD, E3). As to expression, expressed in many tissues, with the highest level in heart and skeletal muscle, intermediate levels in brain, kidney, pancreas and liver, and low levels in placenta and lung.

The protein resides in the mitochondrion matrix. The enzyme catalyses L-seryl-[pyruvate dehydrogenase E1 alpha subunit] + ATP = O-phospho-L-seryl-[pyruvate dehydrogenase E1 alpha subunit] + ADP + H(+). Its activity is regulated as follows. Activity is enhanced by binding to the pyruvate dehydrogenase subunit DLAT. Inhibited by ADP and pyruvate; these compounds interfere with DLAT binding and thereby inhibit kinase activity. Inhibited by dichloroacetate. Inhibited by AZD7545; this compound interferes with DLAT binding and thereby inhibits kinase activity. Kinase that plays a key role in the regulation of glucose and fatty acid metabolism and homeostasis via phosphorylation of the pyruvate dehydrogenase subunits PDHA1 and PDHA2. This inhibits pyruvate dehydrogenase activity, and thereby regulates metabolite flux through the tricarboxylic acid cycle, down-regulates aerobic respiration and inhibits the formation of acetyl-coenzyme A from pyruvate. Inhibition of pyruvate dehydrogenase decreases glucose utilization and increases fat metabolism. Mediates cellular responses to insulin. Plays an important role in maintaining normal blood glucose levels and in metabolic adaptation to nutrient availability. Via its regulation of pyruvate dehydrogenase activity, plays an important role in maintaining normal blood pH and in preventing the accumulation of ketone bodies under starvation. Plays a role in the regulation of cell proliferation and in resistance to apoptosis under oxidative stress. Plays a role in p53/TP53-mediated apoptosis. This chain is [Pyruvate dehydrogenase (acetyl-transferring)] kinase isozyme 2, mitochondrial (PDK2), found in Homo sapiens (Human).